The following is a 422-amino-acid chain: MHDLKSIRDNPDGFDAGLKRRGLEPKAAAILDLDTRRRAAQTAFQEMQARRNDASKQIGALKKSGGDASALMDEVASLKERMPAAEEEDKALGAEIESILASIPNLPASDVPDGPDEDHNVELRKWGTPKSFAFTALDHDAIGAKLGLMDFDGAAKLSGARFVVLKGQLARLQRAIGQFMLDLQTVEHGYTEMDPPLMVKDGAAFGTGQLPKFGEDLFKTNTGHWLIPTAEVPLTNLVSDEILDEKALPLRMTALTPCFRSEAGAAGKDTRGMIRQHQFHKVEMVSIAHPDASGAEHERMTQCAETVLQRLGLAYRVIVLCTGDMGFSAQKTYDIEVWLPGQQRYREISSCSNCGDFQARRMKARFRPEGEKGTRFVHTLNGSGLAVGRTLIAVMENYQREDGTIEVPEALRPYMGGLEVIG.

Residues 1-20 (MHDLKSIRDNPDGFDAGLKR) are disordered. 229–231 (TAE) serves as a coordination point for L-serine. Residue 260-262 (RSE) participates in ATP binding. Glutamate 283 contacts L-serine. 347–350 (EISS) contacts ATP. Residue serine 383 participates in L-serine binding.

The protein belongs to the class-II aminoacyl-tRNA synthetase family. Type-1 seryl-tRNA synthetase subfamily. Homodimer. The tRNA molecule binds across the dimer.

It localises to the cytoplasm. The enzyme catalyses tRNA(Ser) + L-serine + ATP = L-seryl-tRNA(Ser) + AMP + diphosphate + H(+). It catalyses the reaction tRNA(Sec) + L-serine + ATP = L-seryl-tRNA(Sec) + AMP + diphosphate + H(+). Its pathway is aminoacyl-tRNA biosynthesis; selenocysteinyl-tRNA(Sec) biosynthesis; L-seryl-tRNA(Sec) from L-serine and tRNA(Sec): step 1/1. Catalyzes the attachment of serine to tRNA(Ser). Is also able to aminoacylate tRNA(Sec) with serine, to form the misacylated tRNA L-seryl-tRNA(Sec), which will be further converted into selenocysteinyl-tRNA(Sec). In Paramagnetospirillum magneticum (strain ATCC 700264 / AMB-1) (Magnetospirillum magneticum), this protein is Serine--tRNA ligase.